Consider the following 159-residue polypeptide: Endoribonuclease YbeY (159 aa).

Positions 125, 129, and 135 each coordinate Zn(2+).

It belongs to the endoribonuclease YbeY family. The cofactor is Zn(2+).

The protein resides in the cytoplasm. Its function is as follows. Single strand-specific metallo-endoribonuclease involved in late-stage 70S ribosome quality control and in maturation of the 3' terminus of the 16S rRNA. In Thermoanaerobacter pseudethanolicus (strain ATCC 33223 / 39E) (Clostridium thermohydrosulfuricum), this protein is Endoribonuclease YbeY.